Consider the following 176-residue polypeptide: Peptidyl-prolyl cis-trans isomerase CYP19-3 (176 aa).

Residues 7–170 (FFDILIGKMK…ERVVIEDCGE (164 aa)) enclose the PPIase cyclophilin-type domain.

It belongs to the cyclophilin-type PPIase family. In terms of tissue distribution, ubiquitous, with highest levels in flowers and lowest levels in roots.

It is found in the cytoplasm. It catalyses the reaction [protein]-peptidylproline (omega=180) = [protein]-peptidylproline (omega=0). Its activity is regulated as follows. Binds cyclosporin A (CsA). CsA mediates some of its effects via an inhibitory action on PPIase. In terms of biological role, PPIases accelerate the folding of proteins. It catalyzes the cis-trans isomerization of proline imidic peptide bonds in oligopeptides. This chain is Peptidyl-prolyl cis-trans isomerase CYP19-3 (CYP19-3), found in Arabidopsis thaliana (Mouse-ear cress).